Here is a 223-residue protein sequence, read N- to C-terminus: 26S proteasome non-ATPase regulatory subunit 9 (223 aa).

A compositionally biased stretch (basic and acidic residues) spans 103-121 (RDKEKQARDMAEAHKEAMS). Residues 103-141 (RDKEKQARDMAEAHKEAMSRKLGQSESQGPPRAFAKVNS) form a disordered region. Positions 108–195 (QARDMAEAHK…KPLNVTVIRR (88 aa)) constitute a PDZ domain. Serine 129 is subject to Phosphoserine.

It belongs to the proteasome subunit p27 family. Interacts with PSMC3. Part of a transient complex (modulator) containing PSMD9, PSMC6 and PSMC3 formed during the assembly of the 26S proteasome. In terms of tissue distribution, expressed in all tissues tested, highly expressed in liver and kidney.

Functionally, acts as a chaperone during the assembly of the 26S proteasome, specifically of the base subcomplex of the PA700/19S regulatory complex (RC). During the base subcomplex assembly is part of an intermediate PSMD9:PSMC6:PSMC3 module, also known as modulator trimer complex; PSMD9 is released during the further base assembly process. In Homo sapiens (Human), this protein is 26S proteasome non-ATPase regulatory subunit 9 (PSMD9).